A 101-amino-acid polypeptide reads, in one-letter code: uncharacterized protein (101 aa).

This is an uncharacterized protein from Escherichia coli (strain K12).